The primary structure comprises 155 residues: Endoribonuclease YbeY (155 aa).

Zn(2+) contacts are provided by His-117, His-121, and His-127.

The protein belongs to the endoribonuclease YbeY family. Zn(2+) serves as cofactor.

Its subcellular location is the cytoplasm. In terms of biological role, single strand-specific metallo-endoribonuclease involved in late-stage 70S ribosome quality control and in maturation of the 3' terminus of the 16S rRNA. This chain is Endoribonuclease YbeY, found in Dichelobacter nodosus (strain VCS1703A).